Here is a 369-residue protein sequence, read N- to C-terminus: MSDLRRIVIKVGSSSLNHPEGGLDDQAIQRIAGVIAGIRQLGVECVLVSSGAVAAGVGKLGLKTKPKDMAGKQAVAAVGQGVLIEKYALALEARGLVCAQVLLSRLDLAEASRYRNAQNTLEQLLRYQVIPIINENDTVAVEELCFGDNDRLSALVAGLVHGDLLVILTDVDGLYSANPKLNPQAELIEEVEDLTQVMHIAGGAGSSMGTGGMVTKLKAAEITTRFGMGMFLLHSKRMEEIIELIQGERPLGTYFFPAAHRIMGKKRWIAYGGLSEGSIFIDEGAVKALLKGKSLLASGITGIDGVWERKELVRINNPDGIEVARGLVELSSEELEKVRGKHSEEMLATIPNLEGEEVVHRDNMTLMIE.

Lysine 10 is a binding site for ATP. Residues serine 50, aspartate 137, and asparagine 149 each coordinate substrate. ATP-binding positions include 169–170 and 210–216; these read TD and TGGMVTK. Residues 276-349 form the PUA domain; it reads EGSIFIDEGA…GKHSEEMLAT (74 aa).

This sequence belongs to the glutamate 5-kinase family.

Its subcellular location is the cytoplasm. It catalyses the reaction L-glutamate + ATP = L-glutamyl 5-phosphate + ADP. It functions in the pathway amino-acid biosynthesis; L-proline biosynthesis; L-glutamate 5-semialdehyde from L-glutamate: step 1/2. Its function is as follows. Catalyzes the transfer of a phosphate group to glutamate to form L-glutamate 5-phosphate. This chain is Glutamate 5-kinase, found in Desulfitobacterium hafniense (strain Y51).